The chain runs to 284 residues: Protein-S-isoprenylcysteine O-methyltransferase (284 aa).

Over 1–16 the chain is Cytoplasmic; that stretch reads MAGCAARVPPGSEARL. A helical membrane pass occupies residues 17-33; the sequence is SLATFLLGASVLALPLL. Topologically, residues 34–41 are lumenal; it reads TRAGLQGR. A helical membrane pass occupies residues 42 to 59; the sequence is TGLALYVAGLNALLLLLY. The Cytoplasmic portion of the chain corresponds to 60-69; that stretch reads RPPRYQIAIR. The helical transmembrane segment at 70–87 threads the bilayer; the sequence is ACFLGFVFGCGVLLSFSQ. The Lumenal portion of the chain corresponds to 88 to 92; the sequence is SSWNH. A helical transmembrane segment spans residues 93-112; it reads FGWYVCSLSLFHYSEYLVTA. The Cytoplasmic segment spans residues 113–131; the sequence is VNNPKSLSLDSFLLNHSLE. The helical transmembrane segment at 132–149 threads the bilayer; that stretch reads YTVAALSSWIEFTLENIF. The Lumenal segment spans residues 150-154; the sequence is WPELK. A helical membrane pass occupies residues 155–174; the sequence is QITWLSAAGLLMVIFGECLR. The Cytoplasmic segment spans residues 175-212; it reads KVAMFTAGSNFNHVVQSEKSDTHTLVTSGVYAWCRHPS. S-adenosyl-L-methionine-binding positions include Gln190, 197–200, Tyr205, and 210–213; these read HTLV and HPSY. Residues 213 to 228 form a helical membrane-spanning segment; sequence YVGWFYWSIGTQVMLC. A topological domain (lumenal) is located at residue Asn229. A helical transmembrane segment spans residues 230–244; it reads PICGVVYALTVWRFF. At 245-284 the chain is on the cytoplasmic side; the sequence is RDRTEEEEISLIHFFGEEYLDYKKRVPTGLPFIKGVKVGL. A substrate-binding site is contributed by Arg247. Position 251 (Glu251) interacts with S-adenosyl-L-methionine.

This sequence belongs to the class VI-like SAM-binding methyltransferase superfamily. Isoprenylcysteine carboxyl methyltransferase family.

The protein localises to the endoplasmic reticulum membrane. It carries out the reaction [protein]-C-terminal S-[(2E,6E)-farnesyl]-L-cysteine + S-adenosyl-L-methionine = [protein]-C-terminal S-[(2E,6E)-farnesyl]-L-cysteine methyl ester + S-adenosyl-L-homocysteine. Functionally, catalyzes the post-translational methylation of isoprenylated C-terminal cysteine residues. The chain is Protein-S-isoprenylcysteine O-methyltransferase from Rattus norvegicus (Rat).